The following is a 450-amino-acid chain: 5-amino-6-(D-ribitylamino)uracil--L-tyrosine 4-hydroxyphenyl transferase (450 aa).

Positions 1–24 (MPDVPETVGTPDGSTEFEHRPTTD) are disordered. The 269-residue stretch at 82–350 (VTFVANLNNN…MIAVSRLFLD (269 aa)) folds into the Radical SAM core domain. 3 residues coordinate [4Fe-4S] cluster: Cys-96, Cys-100, and Cys-103. The disordered stretch occupies residues 430-450 (PDADVLGPQLGPRADGTPLLD).

The protein belongs to the radical SAM superfamily. CofH family. As to quaternary structure, consists of two subunits, CofG and CofH. [4Fe-4S] cluster serves as cofactor.

The enzyme catalyses 5-amino-6-(D-ribitylamino)uracil + L-tyrosine + S-adenosyl-L-methionine = 5-amino-5-(4-hydroxybenzyl)-6-(D-ribitylimino)-5,6-dihydrouracil + 2-iminoacetate + 5'-deoxyadenosine + L-methionine + H(+). The protein operates within cofactor biosynthesis; coenzyme F0 biosynthesis. Functionally, catalyzes the radical-mediated synthesis of 5-amino-5-(4-hydroxybenzyl)-6-(D-ribitylimino)-5,6-dihydrouracil from 5-amino-6-(D-ribitylamino)uracil and L-tyrosine. The chain is 5-amino-6-(D-ribitylamino)uracil--L-tyrosine 4-hydroxyphenyl transferase from Haloarcula marismortui (strain ATCC 43049 / DSM 3752 / JCM 8966 / VKM B-1809) (Halobacterium marismortui).